The primary structure comprises 504 residues: Cytochrome P450 monooxygenase iccC (504 aa).

The chain crosses the membrane as a helical span at residues 7–26 (LPWILLYTGFLAIFLSRLFS). N134, N312, N365, and N374 each carry an N-linked (GlcNAc...) asparagine glycan. Position 452 (C452) interacts with heme. N494 carries N-linked (GlcNAc...) asparagine glycosylation.

This sequence belongs to the cytochrome P450 family. Heme serves as cofactor.

It localises to the membrane. The enzyme catalyses (3E,5S)-3-[(2E,4E,8S,10E,12Z)-1-hydroxy-4,8-dimethyltetradeca-2,4,10,12-tetraen-1-ylidene]-5-[(4-hydroxyphenyl)methyl]pyrrolidine-2,4-dione + reduced [NADPH--hemoprotein reductase] + O2 = 3-[(2E,4E,8S,10E,12Z)-4,8-dimethyltetradeca-2,4,10,12-tetraenoyl]-4-hydroxy-5-(4-hydroxyphenyl)-1,2-dihydropyridin-2-one + oxidized [NADPH--hemoprotein reductase] + 2 H2O. It functions in the pathway mycotoxin biosynthesis. In terms of biological role, cytochrome P450 monooxygenase; part of the gene cluster that mediates the biosynthesis of ilicicolin H, a 4-hydroxy-2-pyridonealkaloid that has potent and broad antifungal activities by inhibiting the mitochondrial respiration chain. IccC catalyzes the ring expansion of the tetramate intermediate to the acyclic 2-pyridone intermediate that contains the trans bis-diene chain. The biosynthesis of ilicicolin H starts with formation of the tetramic acid by the hybrid PKS-NRPS synthetase iccA with the partnering trans-enoyl reductase iccB since iccA lacks a designated enoylreductase (ER) domain. The cytochrome P450 monooxygenase iccC then catalyzes the ring expansion of the tetramate to the acyclic 2-pyridone. The pericyclase iccD further converts the acyclic 2-pyridone into 8-epi-ilicicolin H. Finally, the epimerase iccE converts 8-epi-ilicicolin H into ilicicolin H via epimerization. IccA to iccE are sufficient for ilicicolin H biosynthesis and the roles of the remaining enzymes, iccF, iccG and iccH within the pathway have still to be determined. The chain is Cytochrome P450 monooxygenase iccC from Talaromyces variabilis (Penicillium variabile).